A 474-amino-acid polypeptide reads, in one-letter code: uncharacterized protein (474 aa).

Residues Gly374–Leu398 form a helical membrane-spanning segment.

It is found in the membrane. This is an uncharacterized protein from Borreliella burgdorferi (strain ATCC 35210 / DSM 4680 / CIP 102532 / B31) (Borrelia burgdorferi).